The chain runs to 181 residues: Epidermin decarboxylase (181 aa).

Histidine 67 is a catalytic residue.

It belongs to the HFCD (homooligomeric flavin containing Cys decarboxylase) superfamily. In terms of assembly, homododecamer. FMN serves as cofactor.

Its function is as follows. Catalyzes the removal of two reducing equivalents (oxidative decarboxylation) from the cysteine residue of the C-terminal meso-lanthionine of epidermin to form a --C==C-- double bond. In Staphylococcus epidermidis, this protein is Epidermin decarboxylase (epiD).